The primary structure comprises 315 residues: tRNA pseudouridine synthase B (315 aa).

The Nucleophile role is filled by Asp54.

This sequence belongs to the pseudouridine synthase TruB family. Type 1 subfamily.

It catalyses the reaction uridine(55) in tRNA = pseudouridine(55) in tRNA. Responsible for synthesis of pseudouridine from uracil-55 in the psi GC loop of transfer RNAs. In Agrobacterium fabrum (strain C58 / ATCC 33970) (Agrobacterium tumefaciens (strain C58)), this protein is tRNA pseudouridine synthase B.